The sequence spans 785 residues: Uncoating factor OPG117 (785 aa).

Residue Asp170 is part of the active site. The segment at 342–469 is primase; it reads TERGDHIVWI…ELINIINDIQ (128 aa). Residues 477–639 enclose the SF3 helicase domain; it reads KNRELYEKTL…FSQPSGREAA (163 aa). 503 to 510 contacts ATP; the sequence is GETATGKS.

Belongs to the orthopoxvirus OPG117 family. As to quaternary structure, homomultimer; hexamer. Interacts with OPG148.

It is found in the host cytoplasm. Multifunctional protein required for genome uncoating and replication. Major viral uncoating protein that is required for the release of the viral genome from incoming viral cores containing the viral DNA genome. Possesses an ATPase activity that is required for hexamerization and uncoating. The polypeptide is Uncoating factor OPG117 (OPG117) (Variola virus (isolate Human/India/Ind3/1967) (VARV)).